A 73-amino-acid chain; its full sequence is Translational regulator CsrA (73 aa).

It belongs to the CsrA/RsmA family. Homodimer; the beta-strands of each monomer intercalate to form a hydrophobic core, while the alpha-helices form wings that extend away from the core.

Its subcellular location is the cytoplasm. A translational regulator that binds mRNA to regulate translation initiation and/or mRNA stability. Usually binds in the 5'-UTR at or near the Shine-Dalgarno sequence preventing ribosome-binding, thus repressing translation. Its main target seems to be the major flagellin gene, while its function is anatagonized by FliW. This chain is Translational regulator CsrA, found in Clostridium acetobutylicum (strain ATCC 824 / DSM 792 / JCM 1419 / IAM 19013 / LMG 5710 / NBRC 13948 / NRRL B-527 / VKM B-1787 / 2291 / W).